We begin with the raw amino-acid sequence, 433 residues long: Adenylosuccinate synthetase (433 aa).

Residues 11 to 17 and 39 to 41 each bind GTP; these read GDEGKGK and GHT. The active-site Proton acceptor is the aspartate 12. Mg(2+) is bound by residues aspartate 12 and glycine 39. Residues 12–15, 37–40, threonine 134, arginine 148, asparagine 230, threonine 245, and arginine 309 contribute to the IMP site; these read DEGK and NAGH. Histidine 40 serves as the catalytic Proton donor. 305–311 provides a ligand contact to substrate; the sequence is VTTGRKR. GTP is bound by residues arginine 311, 337–339, and 419–421; these read KLD and GTG.

The protein belongs to the adenylosuccinate synthetase family. Homodimer. Requires Mg(2+) as cofactor.

It localises to the cytoplasm. It carries out the reaction IMP + L-aspartate + GTP = N(6)-(1,2-dicarboxyethyl)-AMP + GDP + phosphate + 2 H(+). It participates in purine metabolism; AMP biosynthesis via de novo pathway; AMP from IMP: step 1/2. Its function is as follows. Plays an important role in the de novo pathway and in the salvage pathway of purine nucleotide biosynthesis. Catalyzes the first committed step in the biosynthesis of AMP from IMP. The polypeptide is Adenylosuccinate synthetase (Saccharomyces cerevisiae (strain AWRI1631) (Baker's yeast)).